The chain runs to 522 residues: Sorting nexin-1 (522 aa).

Residues 1–142 are disordered; the sequence is MASGGGGCSA…ELEEEEQEDQ (142 aa). Ser-32 and Ser-39 each carry phosphoserine. Residues 35–45 show a composition bias toward acidic residues; that stretch reads EAGDSDTEGED. A phosphothreonine mark is found at Thr-41 and Thr-48. The segment covering 55 to 65 has biased composition (polar residues); sequence KPQSPKKTTSL. Ser-58 and Ser-72 each carry phosphoserine. Positions 71-80 are enriched in basic and acidic residues; the sequence is GSKENGIHEE. The segment covering 98-107 has biased composition (polar residues); it reads LDSTQNNQKT. A compositionally biased stretch (acidic residues) spans 132 to 142; that stretch reads EELEEEEQEDQ. Positions 143–272 constitute a PX domain; the sequence is FDLTVGITDP…EFLEKEELPR (130 aa). 3 residues coordinate a 1,2-diacyl-sn-glycero-3-phospho-(1D-myo-inositol-3-phosphate): Arg-186, Ser-188, and Lys-214. Position 188 is a phosphoserine (Ser-188). At Lys-237 the chain carries N6-acetyllysine. Arg-238 provides a ligand contact to a 1,2-diacyl-sn-glycero-3-phospho-(1D-myo-inositol-3-phosphate). The residue at position 280 (Ser-280) is a Phosphoserine. Positions 281–298 are membrane-binding amphipathic helix; it reads GAGLLKMFNKATDAVSKM. In terms of domain architecture, BAR spans 302 to 522; sequence MNESDIWFEE…AFLPEARAIS (221 aa).

Belongs to the sorting nexin family. As to quaternary structure, predominantly forms heterodimers with BAR domain-containing sorting nexins SNX5, SNX6 and SNX32; can self-associate to form homodimers. The heterodimers are proposed to self-assemble into helical arrays on the membrane to stabilize and expand local membrane curvature underlying endosomal tubule formation. Thought to be a component of the originally described retromer complex (also called SNX-BAR retromer) which is a pentamer containing the heterotrimeric retromer cargo-selective complex (CSC), also described as vacuolar protein sorting subcomplex (VPS) and a heterodimeric membrane-deforming subcomplex formed between SNX1 or SNX2 and SNX5 or SNX6 (also called SNX-BAR subcomplex); the respective CSC and SNX-BAR subcomplexes associate with low affinity. Interacts with SNX5, SNX6, SNX32, VPS26A, VPS29, VPS35, DRD5, DENND5A, KALRN, RHOG (GDP-bound form). The interaction with SNX2 is reported controversially. Interacts with DNAJC13; prevented by presence of HGS. Interacts with HGS.

The protein localises to the endosome membrane. It localises to the golgi apparatus. The protein resides in the trans-Golgi network membrane. Its subcellular location is the early endosome membrane. It is found in the cell projection. The protein localises to the lamellipodium. Involved in several stages of intracellular trafficking. Interacts with membranes containing phosphatidylinositol 3-phosphate (PtdIns(3P)) or phosphatidylinositol 3,5-bisphosphate (PtdIns(3,5)P2). Acts in part as component of the retromer membrane-deforming SNX-BAR subcomplex. The SNX-BAR retromer mediates retrograde transport of cargo proteins from endosomes to the trans-Golgi network (TGN) and is involved in endosome-to-plasma membrane transport for cargo protein recycling. The SNX-BAR subcomplex functions to deform the donor membrane into a tubular profile called endosome-to-TGN transport carrier (ETC). Can sense membrane curvature and has in vitro vesicle-to-membrane remodeling activity. Involved in retrograde endosome-to-TGN transport of lysosomal enzyme receptors (IGF2R, M6PR and SORT1). Plays a role in targeting ligand-activated EGFR to the lysosomes for degradation after endocytosis from the cell surface and release from the Golgi. Involvement in retromer-independent endocytic trafficking of P2RY1 and lysosomal degradation of protease-activated receptor-1/F2R. Promotes KALRN- and RHOG-dependent but retromer-independent membrane remodeling such as lamellipodium formation; the function is dependent on GEF activity of KALRN. Required for endocytosis of DRD5 upon agonist stimulation but not for basal receptor trafficking. This Rattus norvegicus (Rat) protein is Sorting nexin-1 (Snx1).